We begin with the raw amino-acid sequence, 106 residues long: Antitoxin MazE3 (106 aa).

In terms of assembly, forms a complex with cognate toxin MazF3, possibly with 1:1 stoichiometry.

Antitoxin component of a type II toxin-antitoxin (TA) system. Upon expression in E.coli and M.smegmatis neutralizes the effect of cognate toxin MazF3. Overexpression of MazE3 alone decreased persister cells formation in M.smegmatis upon challenge with gentamicin or kanamycin. This Mycobacterium tuberculosis (strain ATCC 25618 / H37Rv) protein is Antitoxin MazE3 (mazE3).